A 692-amino-acid chain; its full sequence is Elongation factor G (692 aa).

The region spanning 8 to 282 is the tr-type G domain; it reads EKTRNIGIMA…GVVDYLPSPV (275 aa). Residues 17–24, 81–85, and 135–138 each bind GTP; these read AHIDAGKT, DTPGH, and NKMD.

Belongs to the TRAFAC class translation factor GTPase superfamily. Classic translation factor GTPase family. EF-G/EF-2 subfamily.

The protein resides in the cytoplasm. In terms of biological role, catalyzes the GTP-dependent ribosomal translocation step during translation elongation. During this step, the ribosome changes from the pre-translocational (PRE) to the post-translocational (POST) state as the newly formed A-site-bound peptidyl-tRNA and P-site-bound deacylated tRNA move to the P and E sites, respectively. Catalyzes the coordinated movement of the two tRNA molecules, the mRNA and conformational changes in the ribosome. This is Elongation factor G from Geobacillus kaustophilus (strain HTA426).